The chain runs to 446 residues: Eukaryotic translation initiation factor 2 subunit gamma (446 aa).

The region spanning Gln-21–Val-227 is the tr-type G domain. The G1 stretch occupies residues Gly-30–Ser-37. Ala-33 to Thr-38 serves as a coordination point for GTP. The G2 stretch occupies residues Asn-58–Lys-62. The segment at Asp-114–Gly-117 is G3. GTP-binding positions include Asn-170 to Asp-173 and Ser-205 to Gln-207. A G4 region spans residues Asn-170–Asp-173. Positions Ser-205–Gln-207 are G5. The interacts with cdc123 stretch occupies residues Ala-436–Val-446.

It belongs to the TRAFAC class translation factor GTPase superfamily. Classic translation factor GTPase family. EIF2G subfamily. As to quaternary structure, eukaryotic translation initiation factor 2 eIF2 is a heterotrimeric complex composed of an alpha, a beta and a gamma subunit. The factors eIF-1, eIF-2, eIF-3, TIF5/eIF-5 and methionyl-tRNAi form a multifactor complex (MFC) that may bind to the 40S ribosome. Interacts with cdc123; the interaction is direct.

The protein localises to the cytoplasm. Its subcellular location is the cytosol. The enzyme catalyses GTP + H2O = GDP + phosphate + H(+). Functionally, as a subunit of eukaryotic initiation factor 2 eIF2, involved in the early steps of protein synthesis. In the presence of GTP, eIF-2 forms a ternary complex with initiator tRNA Met-tRNAi and then recruits the 40S ribosomal complex and initiation factors eIF-1, eIF-1A and eIF-3 to form the 43S pre-initiation complex (43S PIC), a step that determines the rate of protein translation. The 43S PIC binds to mRNA and scans downstream to the initiation codon, where it forms a 48S initiation complex by codon-anticodon base pairing. This leads to the displacement of eIF-1 to allow GTPase-activating protein (GAP) eIF-5-mediated hydrolysis of eIF2-bound GTP. Hydrolysis of GTP and release of Pi, which makes GTP hydrolysis irreversible, causes the release of the eIF-2-GDP binary complex from the 40S subunit, an event that is essential for the subsequent joining of the 60S ribosomal subunit to form an elongation-competent 80S ribosome. In order for eIF-2 to recycle and catalyze another round of initiation, the GDP bound to eIF-2 must be exchanged with GTP by way of a reaction catalyzed by GDP-GTP exchange factor (GEF) eIF-2B. This chain is Eukaryotic translation initiation factor 2 subunit gamma (tif213), found in Schizosaccharomyces pombe (strain 972 / ATCC 24843) (Fission yeast).